The primary structure comprises 573 residues: Proline--tRNA ligase (573 aa).

The protein belongs to the class-II aminoacyl-tRNA synthetase family. ProS type 1 subfamily. As to quaternary structure, homodimer.

Its subcellular location is the cytoplasm. It carries out the reaction tRNA(Pro) + L-proline + ATP = L-prolyl-tRNA(Pro) + AMP + diphosphate. In terms of biological role, catalyzes the attachment of proline to tRNA(Pro) in a two-step reaction: proline is first activated by ATP to form Pro-AMP and then transferred to the acceptor end of tRNA(Pro). As ProRS can inadvertently accommodate and process non-cognate amino acids such as alanine and cysteine, to avoid such errors it has two additional distinct editing activities against alanine. One activity is designated as 'pretransfer' editing and involves the tRNA(Pro)-independent hydrolysis of activated Ala-AMP. The other activity is designated 'posttransfer' editing and involves deacylation of mischarged Ala-tRNA(Pro). The misacylated Cys-tRNA(Pro) is not edited by ProRS. The chain is Proline--tRNA ligase from Caldanaerobacter subterraneus subsp. tengcongensis (strain DSM 15242 / JCM 11007 / NBRC 100824 / MB4) (Thermoanaerobacter tengcongensis).